Here is a 331-residue protein sequence, read N- to C-terminus: MAPAVLTALPNRMSLRSLKWSLLLLSLLSFLVIWYLSLPHYNVIERVNWMYFYEYEPIYRQDFRFTLREHSNCSHQNPFLVILVTSRPSDVKARQAIRVTWGEKKSWWGYEVLTFFLLGQQAEREDKTLALSLEDEHVLYGDIIRQDFLDTYNNLTLKTIMAFRWVMEFCPNAKYIMKTDTDVFINTGNLVKYLLNLNHSEKFFTGYPLIDNYSYRGFFHKNHISYQEYPFKVFPPYCSGLGYIMSGDLVPRVYEMMSHVKPIKFEDVYVGICLNLLKVDIHIPEDTNLFFLYRIHLDVCQLRRVIAAHGFSSKEIITFWQVMLRNTTCHY.

Topologically, residues 1–20 (MAPAVLTALPNRMSLRSLKW) are cytoplasmic. The helical; Signal-anchor for type II membrane protein transmembrane segment at 21–43 (SLLLLSLLSFLVIWYLSLPHYNV) threads the bilayer. The Lumenal segment spans residues 44–331 (IERVNWMYFY…VMLRNTTCHY (288 aa)). Residues N72, N154, N198, N212, and N326 are each glycosylated (N-linked (GlcNAc...) asparagine).

The protein belongs to the glycosyltransferase 31 family. Mg(2+) serves as cofactor. Detected in brain, ovary, kidney, uterus and stomach. In ovary, specifically expressed in follicular granulosa cells and shows particularly strong expression at later stages of follicle development.

The protein resides in the golgi apparatus membrane. The catalysed reaction is a globoside Gb3Cer (d18:1(4E)) + UDP-N-acetyl-alpha-D-galactosamine = a globoside Gb4Cer (d18:1(4E)) + UDP + H(+). The protein operates within protein modification; protein glycosylation. Functionally, transfers N-acetylgalactosamine onto globotriaosylceramide. Plays a critical role in preimplantation stage embryonic development. The protein is UDP-GalNAc:beta-1,3-N-acetylgalactosaminyltransferase 1 of Mus musculus (Mouse).